The sequence spans 243 residues: Terpene cyclase dpasB (243 aa).

7 helical membrane-spanning segments follow: residues 16–36 (VVWV…SNYI), 50–70 (MALM…FIYP), 79–99 (IHTL…RYGA), 112–132 (LPVI…AFAE), 141–161 (AVSG…QLLC), 172–189 (LWLA…PNML), and 207–227 (IWFL…LWYV).

It belongs to the paxB family.

It is found in the membrane. It functions in the pathway secondary metabolite biosynthesis; terpenoid biosynthesis. Functionally, terpene cyclase; part of the gene cluster that mediates the biosynthesis of the diterpenoid pyrones subglutinols A and B. The first step of the pathway is the synthesis of the alpha-pyrone moiety by the polyketide synthase dpasA via condensation of one acetyl-CoA starter unit with 3 malonyl-CoA units and 2 methylations. The alpha-pyrone is then combined with geranylgeranyl pyrophosphate (GGPP) formed by the GGPP synthase dpasD through the action of the prenyltransferase dpasC to yield a linear alpha-pyrone diterpenoid. Subsequent steps in the diterpenoid pyrone biosynthetic pathway involve the decalin core formation, which is initiated by the epoxidation of the C10-C11 olefin by the FAD-dependent oxidoreductase dpasE, and is followed by a cyclization cascade catalyzed by the terpene cyclase dpasB. The FAD-linked oxidoreductase dpasF is then involved in tetrahydrofuran (THF) ring formation at the C5 unit to complete the formation of subglutinols A and B. DpasF possesses also an additional catalytic ability of multi-step oxidations to generate a new DDP analog with an enone system at the C5 named FDDP A. The polypeptide is Terpene cyclase dpasB (Apiospora sacchari (Arthrinium sacchari)).